The chain runs to 102 residues: Small ribosomal subunit protein uS10 (102 aa).

Belongs to the universal ribosomal protein uS10 family. In terms of assembly, part of the 30S ribosomal subunit.

Its function is as follows. Involved in the binding of tRNA to the ribosomes. The polypeptide is Small ribosomal subunit protein uS10 (Dehalococcoides mccartyi (strain ATCC BAA-2266 / KCTC 15142 / 195) (Dehalococcoides ethenogenes (strain 195))).